The following is a 78-amino-acid chain: Probable [Fe-S]-dependent transcriptional repressor (78 aa).

Iron-sulfur cluster is bound by residues cysteine 56, cysteine 61, cysteine 64, and cysteine 70.

The protein belongs to the FeoC family.

Functionally, may function as a transcriptional regulator that controls feoABC expression. The sequence is that of Probable [Fe-S]-dependent transcriptional repressor from Escherichia coli O127:H6 (strain E2348/69 / EPEC).